We begin with the raw amino-acid sequence, 206 residues long: Two-component response regulator ARR7 (206 aa).

In terms of domain architecture, Response regulatory spans 25–152; that stretch reads HVLAVDDSIV…DVKRIKQLIM (128 aa). Asp-85 is subject to 4-aspartylphosphate. The tract at residues 165-206 is disordered; sequence SNKRKLQEDSDTSSSSHDDTSIKDSSCSKRMKSESENLFSLL.

It belongs to the ARR family. Type-A subfamily. In terms of processing, two-component system major event consists of a His-to-Asp phosphorelay between a sensor histidine kinase (HK) and a response regulator (RR). In plants, the His-to-Asp phosphorelay involves an additional intermediate named Histidine-containing phosphotransfer protein (HPt). This multistep phosphorelay consists of a His-Asp-His-Asp sequential transfer of a phosphate group between first a His and an Asp of the HK protein, followed by the transfer to a conserved His of the HPt protein and finally the transfer to an Asp in the receiver domain of the RR protein. As to expression, predominantly expressed in roots and young flowers.

The protein localises to the nucleus. Its function is as follows. Functions as a response regulator involved in His-to-Asp phosphorelay signal transduction system. Phosphorylation of the Asp residue in the receiver domain activates the ability of the protein to promote the transcription of target genes. Type-A response regulators seem to act as negative regulators of the cytokinin signaling. The protein is Two-component response regulator ARR7 (ARR7) of Arabidopsis thaliana (Mouse-ear cress).